The sequence spans 504 residues: Arabinose import ATP-binding protein AraG (504 aa).

ABC transporter domains are found at residues 8 to 243 (LSFR…MVGR) and 256 to 499 (YGEE…MPKV). 40 to 47 (GENGAGKS) is a binding site for ATP.

Belongs to the ABC transporter superfamily. Arabinose importer (TC 3.A.1.2.2) family. The complex is composed of two ATP-binding proteins (AraG), two transmembrane proteins (AraH) and a solute-binding protein (AraF).

The protein localises to the cell inner membrane. The enzyme catalyses L-arabinose(out) + ATP + H2O = L-arabinose(in) + ADP + phosphate + H(+). Its function is as follows. Part of the ABC transporter complex AraFGH involved in arabinose import. Responsible for energy coupling to the transport system. The protein is Arabinose import ATP-binding protein AraG of Escherichia coli O6:K15:H31 (strain 536 / UPEC).